Consider the following 757-residue polypeptide: Transcription factor FBD3 (757 aa).

The interval 1-24 (MSSKRLSQNEQEKSPGTGPPTHKR) is disordered. The zn(2)-C6 fungal-type DNA-binding region spans 31-58 (CNACRMRKSRCDGHRPSCSSCLSLGVNC). Disordered regions lie at residues 106–161 (GGTD…DANT) and 202–222 (VAPS…TDVP). Residues 111-120 (NNHHNNHDSP) show a composition bias toward basic and acidic residues. Over residues 125 to 135 (TIAQSITSSRP) the composition is skewed to polar residues.

The protein localises to the nucleus. Transcription factor; part of the Fusarium detoxification of benzoxazolinone cluster involved in the degradation of benzoxazolinones produced by the host plant. Maize, wheat, and rye produce the 2 benzoxazinone phytoanticipins 2,4-dihy-droxy-7-methoxy-1,4-benzoxazin-3-one (DIMBOA) and 2,4-dihydroxy-1,4-benzoxazin-3-one (DIBOA) that, due to their inherent instability once released, spontaneously degrade to the more stable corresponding benzoxazolinones, 6-methoxy-2-benzoxazolinone (MBOA) and 2-benzoxazolinone (BOA), respectively. FDB3 controls the transcription of the FDB gene cluster in response to 6-methoxy-2-benzoxazolinone (MBOA). In Fusarium pseudograminearum (strain CS3096) (Wheat and barley crown-rot fungus), this protein is Transcription factor FBD3.